The following is a 298-amino-acid chain: Porphobilinogen deaminase (298 aa).

The residue at position 239 (cysteine 239) is an S-(dipyrrolylmethanemethyl)cysteine.

This sequence belongs to the HMBS family. In terms of assembly, monomer. Dipyrromethane is required as a cofactor.

It carries out the reaction 4 porphobilinogen + H2O = hydroxymethylbilane + 4 NH4(+). It functions in the pathway porphyrin-containing compound metabolism; protoporphyrin-IX biosynthesis; coproporphyrinogen-III from 5-aminolevulinate: step 2/4. Functionally, tetrapolymerization of the monopyrrole PBG into the hydroxymethylbilane pre-uroporphyrinogen in several discrete steps. This is Porphobilinogen deaminase from Ehrlichia canis (strain Jake).